We begin with the raw amino-acid sequence, 545 residues long: RNA-directed RNA polymerase beta chain (545 aa).

In terms of domain architecture, RdRp catalytic spans 243–373 (RLAQQGSRDG…PNLRKTFTSG (131 aa)).

As to quaternary structure, part of the viral RNA-dependent RNA polymerase complex, the other subunits are probably the host ribosomal protein S1, EF-Tu and EF-Ts.

The catalysed reaction is RNA(n) + a ribonucleoside 5'-triphosphate = RNA(n+1) + diphosphate. In terms of biological role, this is the catalytic subunit of the viral RNA-dependent RNA polymerase complex. This complex is involved in viral RNA replication that produces (+)-stranded genomes via a complementary, (-)-stranded intermediate. This Enterobacteria phage fr (Bacteriophage fr) protein is RNA-directed RNA polymerase beta chain.